We begin with the raw amino-acid sequence, 655 residues long: Very long-chain specific acyl-CoA dehydrogenase, mitochondrial (655 aa).

Residues 1–40 (MQAARIAPSLGRQLLRFGGGSSRPTALLGQPWPGPARRPY) constitute a mitochondrion transit peptide. Residues 41 to 482 (AGGAAQLALD…ALQGCMDKGK (442 aa)) are catalytic. Position 51 is an N6-acetyllysine (K51). N6-acetyllysine; alternate is present on K71. An N6-succinyllysine; alternate modification is found at K71. Residue K195 is modified to N6-succinyllysine. 214 to 223 (FCLTEPSSGS) is a binding site for FAD. Position 237 is an S-nitrosocysteine (C237). Residue K239 is modified to N6-acetyllysine; alternate. K239 is subject to N6-succinyllysine; alternate. 249–251 (WIS) lines the FAD pocket. 2 positions are modified to N6-acetyllysine; alternate: K276 and K278. N6-succinyllysine; alternate is present on residues K276 and K278. K298 is subject to N6-acetyllysine. At K331 the chain carries N6-acetyllysine; alternate. An N6-succinyllysine; alternate modification is found at K331. K372 carries the N6-succinyllysine modification. 461–463 (FEG) lines the substrate pocket. E462 functions as the Proton acceptor in the catalytic mechanism. Residue 464-466 (TND) coordinates FAD. K482 bears the N6-acetyllysine; alternate mark. K482 is subject to N6-succinyllysine; alternate. A membrane-anchoring region spans residues 483–516 (ELSGLGSALKNPFGNAGLLLGEAGKQLRRRAGLG). 2 positions are modified to phosphoserine: S517 and S522. Residue K550 is modified to N6-acetyllysine. Position 556 is an N6-acetyllysine; alternate (K556). The residue at position 556 (K556) is an N6-succinyllysine; alternate. Q562 provides a ligand contact to FAD. An N6-succinyllysine modification is found at K639.

Belongs to the acyl-CoA dehydrogenase family. In terms of assembly, homodimer. Homodimerizes after import into the mitochondrion. FAD serves as cofactor. In terms of processing, S-nitrosylation at Cys-237 in liver improves catalytic efficiency.

It localises to the mitochondrion inner membrane. The enzyme catalyses a very-long-chain 2,3-saturated fatty acyl-CoA + oxidized [electron-transfer flavoprotein] + H(+) = a very-long-chain (2E)-enoyl-CoA + reduced [electron-transfer flavoprotein]. The catalysed reaction is dodecanoyl-CoA + oxidized [electron-transfer flavoprotein] + H(+) = (2E)-dodecenoyl-CoA + reduced [electron-transfer flavoprotein]. It carries out the reaction tetradecanoyl-CoA + oxidized [electron-transfer flavoprotein] + H(+) = (2E)-tetradecenoyl-CoA + reduced [electron-transfer flavoprotein]. It catalyses the reaction oxidized [electron-transfer flavoprotein] + hexadecanoyl-CoA + H(+) = (2E)-hexadecenoyl-CoA + reduced [electron-transfer flavoprotein]. The enzyme catalyses octadecanoyl-CoA + oxidized [electron-transfer flavoprotein] + H(+) = (2E)-octadecenoyl-CoA + reduced [electron-transfer flavoprotein]. The catalysed reaction is eicosanoyl-CoA + oxidized [electron-transfer flavoprotein] + H(+) = (2E)-eicosenoyl-CoA + reduced [electron-transfer flavoprotein]. It carries out the reaction docosanoyl-CoA + oxidized [electron-transfer flavoprotein] + H(+) = (2E)-docosenoyl-CoA + reduced [electron-transfer flavoprotein]. It catalyses the reaction tetracosanoyl-CoA + oxidized [electron-transfer flavoprotein] + H(+) = (2E)-tetracosenoyl-CoA + reduced [electron-transfer flavoprotein]. The protein operates within lipid metabolism; mitochondrial fatty acid beta-oxidation. Its function is as follows. Very long-chain specific acyl-CoA dehydrogenase is one of the acyl-CoA dehydrogenases that catalyze the first step of mitochondrial fatty acid beta-oxidation, an aerobic process breaking down fatty acids into acetyl-CoA and allowing the production of energy from fats. The first step of fatty acid beta-oxidation consists in the removal of one hydrogen from C-2 and C-3 of the straight-chain fatty acyl-CoA thioester, resulting in the formation of trans-2-enoyl-CoA. Among the different mitochondrial acyl-CoA dehydrogenases, very long-chain specific acyl-CoA dehydrogenase acts specifically on acyl-CoAs with saturated 12 to 24 carbons long primary chains. The sequence is that of Very long-chain specific acyl-CoA dehydrogenase, mitochondrial from Macaca fascicularis (Crab-eating macaque).